Here is a 565-residue protein sequence, read N- to C-terminus: Adenine deaminase (565 aa).

It belongs to the metallo-dependent hydrolases superfamily. Adenine deaminase family. It depends on Mn(2+) as a cofactor.

It catalyses the reaction adenine + H2O + H(+) = hypoxanthine + NH4(+). The polypeptide is Adenine deaminase (Methylobacterium nodulans (strain LMG 21967 / CNCM I-2342 / ORS 2060)).